A 78-amino-acid chain; its full sequence is Pancreatic polypeptide prohormone (78 aa).

The signal sequence occupies residues 1–19 (LLLSTCVALLLQPPLGALG). A Tyrosine amide modification is found at Tyr-55.

The protein belongs to the NPY family.

The protein resides in the secreted. Functionally, hormone secreted by pancreatic cells that acts as a regulator of pancreatic and gastrointestinal functions probably by signaling through the G protein-coupled receptor NPY4R2. The chain is Pancreatic polypeptide prohormone (PPY) from Ovis aries (Sheep).